We begin with the raw amino-acid sequence, 968 residues long: Phosphoenolpyruvate carboxylase 3 (968 aa).

Phosphoserine is present on serine 11. Active-site residues include histidine 173 and lysine 603. The residue at position 705 (serine 705) is a Phosphoserine.

The protein belongs to the PEPCase type 1 family. Homotetramer. The cofactor is Mg(2+). As to expression, expressed in roots and siliques, and to a lower extent in stems, leaves and flowers.

It is found in the cytoplasm. It catalyses the reaction oxaloacetate + phosphate = phosphoenolpyruvate + hydrogencarbonate. By light-reversible phosphorylation. Functionally, through the carboxylation of phosphoenolpyruvate (PEP) it forms oxaloacetate, a four-carbon dicarboxylic acid source for the tricarboxylic acid cycle. This is Phosphoenolpyruvate carboxylase 3 (PPC3) from Arabidopsis thaliana (Mouse-ear cress).